Here is a 397-residue protein sequence, read N- to C-terminus: Acetyl-CoA acetyltransferase, cytosolic (397 aa).

Met-1 carries the N-acetylmethionine modification. The Acyl-thioester intermediate role is filled by Cys-92. Lys-200 is modified (N6-acetyllysine). CoA contacts are provided by Arg-223 and Ser-226. Lys-233 and Lys-235 each carry N6-acetyllysine. CoA is bound at residue Ser-252. The active-site Proton donor/acceptor is Cys-383.

This sequence belongs to the thiolase-like superfamily. Thiolase family. In terms of assembly, homotetramer.

The protein localises to the cytoplasm. It localises to the cytosol. The enzyme catalyses 2 acetyl-CoA = acetoacetyl-CoA + CoA. It participates in lipid metabolism; fatty acid metabolism. Functionally, involved in the biosynthetic pathway of cholesterol. This is Acetyl-CoA acetyltransferase, cytosolic (ACAT2) from Homo sapiens (Human).